Here is an 89-residue protein sequence, read N- to C-terminus: Phytosulfokines 1 (89 aa).

A signal peptide spans 1–22 (MVNPGRTARALCLLCLALLLLG). Positions 23 to 79 (QDTHSRKLLLQEKHSHGVGNGTTTTQEPSRENGGSTGSNNNGQLQFDSAKWEEFHTD) are excised as a propeptide. The interval 33–68 (QEKHSHGVGNGTTTTQEPSRENGGSTGSNNNGQLQF) is disordered. N42 is a glycosylation site (N-linked (GlcNAc...) asparagine). Residues Y80 and Y82 each carry the sulfotyrosine modification. A propeptide spanning residues 85–89 (DVKNP) is cleaved from the precursor.

It belongs to the phytosulfokine family. In terms of processing, sulfation is important for activity and for the binding to a putative membrane receptor. Post-translationally, PSK-alpha is produced by endopeptidase digestion. PSK-beta is produced from PSK-alpha by exopeptidase digestion. Expressed throughout the seedling. More abundant in fragments containing shoot or root apexes where cells proliferate vigorously.

It is found in the secreted. Promotes plant cell differentiation, organogenesis and somatic embryogenesis as well as cell proliferation. The protein is Phytosulfokines 1 (PSK1) of Oryza sativa subsp. indica (Rice).